The following is a 338-amino-acid chain: MDEPACNGTSNEWQRPQLIVAGPRAARRRQMLASLDLNTLLALEALLEHRNVTQAARHLGLSQPSVSRALIRLRGVFNDDLLVRGSSGMVPTPHAQRLGQMLPPVLDSIRGMVDPGLDQGEWRLTARMAMPDHQAIVLLPPFLPLMRERAPNLDIVTDSLLALRRLEQGEIDLAVGQIGEAPPGYFRRRLYNDRFACLLRNGHPALEQESIIDTFSALRHAAIASDTKDGFGRVHDDLVKLDLQDPDPVLVSNVLTAGLAIVSTDLVLVVPRRVATRNAALLPLVIVDPPVELPPYEVALIWHERCHRDPDHRWLRQEIAAAATATEQGQSTDAASRQ.

In terms of domain architecture, HTH lysR-type spans 35 to 92 (LDLNTLLALEALLEHRNVTQAARHLGLSQPSVSRALIRLRGVFNDDLLVRGSSGMVPT). Positions 52-72 (VTQAARHLGLSQPSVSRALIR) form a DNA-binding region, H-T-H motif.

This sequence belongs to the LysR transcriptional regulatory family.

Functionally, transcriptional activator that regulates the expression of genes involved in symbiosis. Among other targets it acts on the nolWBTUV operon. This chain is HTH-type transcriptional regulator SyrM 1 (syrM1), found in Sinorhizobium fredii (strain NBRC 101917 / NGR234).